We begin with the raw amino-acid sequence, 286 residues long: ATP synthase gamma chain (286 aa).

Belongs to the ATPase gamma chain family. In terms of assembly, F-type ATPases have 2 components, CF(1) - the catalytic core - and CF(0) - the membrane proton channel. CF(1) has five subunits: alpha(3), beta(3), gamma(1), delta(1), epsilon(1). CF(0) has three main subunits: a, b and c.

Its subcellular location is the cell inner membrane. In terms of biological role, produces ATP from ADP in the presence of a proton gradient across the membrane. The gamma chain is believed to be important in regulating ATPase activity and the flow of protons through the CF(0) complex. This is ATP synthase gamma chain from Leptospira borgpetersenii serovar Hardjo-bovis (strain JB197).